The following is a 386-amino-acid chain: 2,3,4,5-tetrahydropyridine-2,6-dicarboxylate N-succinyltransferase (386 aa).

The Acyl-anhydride intermediate role is filled by Glu257. Residues Arg259, Gly274, Ser277, Ala300, 315–316 (DA), Gly323, Lys349, and 362–365 (RQDS) contribute to the succinyl-CoA site.

Belongs to the type 2 tetrahydrodipicolinate N-succinyltransferase family. In terms of assembly, homotrimer.

It is found in the cytoplasm. The enzyme catalyses (S)-2,3,4,5-tetrahydrodipicolinate + succinyl-CoA + H2O = (S)-2-succinylamino-6-oxoheptanedioate + CoA. It participates in amino-acid biosynthesis; L-lysine biosynthesis via DAP pathway; LL-2,6-diaminopimelate from (S)-tetrahydrodipicolinate (succinylase route): step 1/3. Its function is as follows. Catalyzes the conversion of the cyclic tetrahydrodipicolinate (THDP) into the acyclic N-succinyl-L-2-amino-6-oxopimelate using succinyl-CoA. The polypeptide is 2,3,4,5-tetrahydropyridine-2,6-dicarboxylate N-succinyltransferase (Campylobacter jejuni subsp. jejuni serotype O:2 (strain ATCC 700819 / NCTC 11168)).